Consider the following 354-residue polypeptide: Probable protein phosphatase 2C 27 (354 aa).

One can recognise a PPM-type phosphatase domain in the interval 54 to 319 (RSGDWSDIGG…DNLTAVMVSF (266 aa)). D98, G99, D267, and D310 together coordinate Mn(2+).

This sequence belongs to the PP2C family. The cofactor is Mg(2+). Mn(2+) serves as cofactor.

The catalysed reaction is O-phospho-L-seryl-[protein] + H2O = L-seryl-[protein] + phosphate. The enzyme catalyses O-phospho-L-threonyl-[protein] + H2O = L-threonyl-[protein] + phosphate. This chain is Probable protein phosphatase 2C 27, found in Oryza sativa subsp. japonica (Rice).